Reading from the N-terminus, the 247-residue chain is Carboxy-S-adenosyl-L-methionine synthase (247 aa).

S-adenosyl-L-methionine-binding positions include tyrosine 39, 64-66 (GCS), 89-90 (DN), 117-118 (DI), asparagine 132, and arginine 199.

It belongs to the class I-like SAM-binding methyltransferase superfamily. Cx-SAM synthase family. As to quaternary structure, homodimer.

The catalysed reaction is prephenate + S-adenosyl-L-methionine = carboxy-S-adenosyl-L-methionine + 3-phenylpyruvate + H2O. In terms of biological role, catalyzes the conversion of S-adenosyl-L-methionine (SAM) to carboxy-S-adenosyl-L-methionine (Cx-SAM). The chain is Carboxy-S-adenosyl-L-methionine synthase from Shigella boydii serotype 4 (strain Sb227).